Reading from the N-terminus, the 134-residue chain is Cytochrome b5 (134 aa).

N-acetylalanine is present on alanine 2. N6-acetyllysine is present on residues lysine 7, lysine 10, and lysine 19. Residues 9-85 form the Cytochrome b5 heme-binding domain; the sequence is VKYYTLEEIQ…SKTFIIGELH (77 aa). Positions 44 and 68 each coordinate heme. The helical transmembrane segment at 109–131 threads the bilayer; it reads WWTNWVIPAISALVVSLMYHFYT.

The protein belongs to the cytochrome b5 family.

It localises to the endoplasmic reticulum membrane. Its subcellular location is the microsome membrane. The protein localises to the cytoplasm. Cytochrome b5 is a membrane-bound hemoprotein functioning as an electron carrier for several membrane-bound oxygenases. This is Cytochrome b5 (CYB5A) from Sus scrofa (Pig).